Reading from the N-terminus, the 156-residue chain is MPRVPITKEGFERLKIELQRLQRDERPMVIRAIEEARSHGDISENAEYEAAKEKQAMIEGRIQDLCQKMGECEIVEPSDNDNGRAIFGSTVVVEDTETGEVTSYRLVGPYEADVQSGTISVVSPLGKALIGKEEGEEIRVQTPKGVRNIEVLEIRN.

Residues E44–Q67 adopt a coiled-coil conformation.

The protein belongs to the GreA/GreB family.

Functionally, necessary for efficient RNA polymerase transcription elongation past template-encoded arresting sites. The arresting sites in DNA have the property of trapping a certain fraction of elongating RNA polymerases that pass through, resulting in locked ternary complexes. Cleavage of the nascent transcript by cleavage factors such as GreA or GreB allows the resumption of elongation from the new 3'terminus. GreA releases sequences of 2 to 3 nucleotides. This is Transcription elongation factor GreA from Syntrophobacter fumaroxidans (strain DSM 10017 / MPOB).